Consider the following 180-residue polypeptide: Large ribosomal subunit protein uL16 (180 aa).

The protein belongs to the universal ribosomal protein uL16 family.

This chain is Large ribosomal subunit protein uL16, found in Pyrobaculum aerophilum (strain ATCC 51768 / DSM 7523 / JCM 9630 / CIP 104966 / NBRC 100827 / IM2).